A 642-amino-acid polypeptide reads, in one-letter code: MYTSRLLLSNLASCLSLATLVASFPANQQDLTFAKRNGTFEQSVFYGLTGPEVEAKLAKLKADGYRPTSLNIHGSTSDAKYAGIWTKQTGDDFETILGANKTVYDAWLDSHKAQGYVSTHVSATGGSSDALFAGVMEKVPSVANWIQVCGLDNPYAYANATIDEPMYIKGVSMYGAPNERQYCILGHENLVNYQQTVFYQTDYFKKDYAKLLQSETSKRHWRPVFIDLSEDLLPTPIFDDTSVGQWVARTDLSASELEAEIAAQKAKNLYAVHIAGAGSKGSKYAVLFAEHLSPLERKWTVTGEVTGFKTNDVVAKDMDAVMEEFMKKNSVRQAQVAASVNGTVVAERSYTWAESDRAVVKPTDKFGLGSVSKMFTYAATTNLLNEGLLNHTTRVYPFLGMNNPADNRSLDITVDHLLQHTAGYNRDIKPDIGFIFRNIALERNQTTPVSLRELIEYVYEQPLDFTPGTDSVYSNYGTMLLSYLIANITGESFNSYIHKNVLNGLDVELYPTSPELNANNPIVQETKYTFYPAQDPASTKQVSNANGGDGSIREEAIGAFGLRASASTISQFLANHAAYDIGPRQAYTYRDGTIVGSRAFAQSQDLIDWSLILNTREYESEQKWEQLVFGPISQWYKYALAE.

Positions 1–23 (MYTSRLLLSNLASCLSLATLVAS) are cleaved as a signal peptide. Asn37, Asn100, Asn159, and Asn341 each carry an N-linked (GlcNAc...) asparagine glycan. A disulfide bridge links Cys149 with Cys183. Ser370 is a catalytic residue. 5 N-linked (GlcNAc...) asparagine glycosylation sites follow: Asn390, Asn407, Asn444, Asn487, and Asn494.

This sequence belongs to the peptidase S12 family.

It is found in the secreted. It catalyses the reaction a glycyl-glycyl-[protein] + H2O = N-terminal glycyl-[protein] + [protein]-C-terminal glycine. Its activity is regulated as follows. Not inhibited by phenylmethylsulfonyl fluoride (PMSF; serine peptidase class S1 inhibitor), clavulanic acid (beta-lactamase inhibitor) or ampicillin (penicillin-binding protein (PBP) inhibitor). Functionally, serine-type endopeptidase that cleaves Gly-Gly bonds in the polyglycine linker of host plant class IV chitinases to disrupt their chitin-binding, and thereby plays a role in lowering the defense responses of the host to the fungus. Degrades Z.mays Endochitinase A (CHIA). Degrades Z.mays Endochitinase B (CHIB). Has no activity on Z.mays CHIA following CHIA cleavage by fungalysin. This Epicoccum sorghinum (Endophyte fungus) protein is Polyglycine hydrolase.